Reading from the N-terminus, the 135-residue chain is Large ribosomal subunit protein eL27x (135 aa).

Belongs to the eukaryotic ribosomal protein eL27 family.

The protein is Large ribosomal subunit protein eL27x (RPL27C) of Arabidopsis thaliana (Mouse-ear cress).